We begin with the raw amino-acid sequence, 497 residues long: Kynureninase (497 aa).

The interval glycine 59–aspartate 86 is disordered. Positions alanine 75–aspartate 86 are enriched in polar residues. Pyridoxal 5'-phosphate is bound by residues leucine 166, threonine 167, phenylalanine 194–aspartate 197, aspartate 278, histidine 281, and tyrosine 303. Lysine 304 carries the post-translational modification N6-(pyridoxal phosphate)lysine. Pyridoxal 5'-phosphate-binding residues include tryptophan 337 and asparagine 365.

The protein belongs to the kynureninase family. Homodimer. It depends on pyridoxal 5'-phosphate as a cofactor.

Its subcellular location is the cytoplasm. It carries out the reaction L-kynurenine + H2O = anthranilate + L-alanine + H(+). The enzyme catalyses 3-hydroxy-L-kynurenine + H2O = 3-hydroxyanthranilate + L-alanine + H(+). Its pathway is amino-acid degradation; L-kynurenine degradation; L-alanine and anthranilate from L-kynurenine: step 1/1. The protein operates within cofactor biosynthesis; NAD(+) biosynthesis; quinolinate from L-kynurenine: step 2/3. Functionally, catalyzes the cleavage of L-kynurenine (L-Kyn) and L-3-hydroxykynurenine (L-3OHKyn) into anthranilic acid (AA) and 3-hydroxyanthranilic acid (3-OHAA), respectively. The polypeptide is Kynureninase (Pyricularia oryzae (strain 70-15 / ATCC MYA-4617 / FGSC 8958) (Rice blast fungus)).